A 1703-amino-acid polypeptide reads, in one-letter code: Gingipain R1 (1703 aa).

Residues 1-20 form the signal peptide; that stretch reads MNKFVSIALCSSLLGGMAFA. The propeptide occupies 21 to 224; that stretch reads QQTELGRNPN…RMFMNYEPGR (204 aa). Ca(2+)-binding residues include aspartate 302, valine 324, aspartate 327, tyrosine 329, glutamate 331, glutamate 385, and histidine 390. Histidine 435 (proton donor) is an active-site residue. The active-site Nucleophile is the cysteine 468. Residues phenylalanine 473, glutamate 482, aspartate 516, glutamate 517, glutamate 520, and histidine 526 each contribute to the Ca(2+) site. The interval 940 to 968 is disordered; sequence WDAPNGTPNPNPNPNPNPNPGTTTLSESF. Pro residues predominate over residues 946-958; that stretch reads TPNPNPNPNPNPN.

The protein belongs to the peptidase C25 family.

It is found in the secreted. It catalyses the reaction Hydrolysis of proteins and small molecule substrates, with a preference for Arg in P1.. Thiol protease. Acts synergistically with RgpB to catalyze the maturation of fimbrial subunits, such as FimA. Its proteolytic activity is a major factor in both periodontal tissue destruction and in evasion of host defense mechanisms. The sequence is that of Gingipain R1 from Porphyromonas gingivalis (strain ATCC 33277 / DSM 20709 / CIP 103683 / JCM 12257 / NCTC 11834 / 2561).